The sequence spans 249 residues: FMN reductase [NAD(P)H] (249 aa).

FMN is bound by residues 11 to 15 (HRSIR), glutamine 67, 134 to 136 (PIG), and 173 to 175 (KPR).

It belongs to the flavin oxidoreductase frp family. As to quaternary structure, homodimer.

The catalysed reaction is FMNH2 + NADP(+) = FMN + NADPH + 2 H(+). It carries out the reaction FMNH2 + NAD(+) = FMN + NADH + 2 H(+). FMN is a competitive inhibitor of NADH, and therefore leads to the preferential utilization of NADPH. Its function is as follows. Reduces FMNH(2) to FMN, with NADH or NADPH as reductant. It also reduces nitroaromatic compounds, quinones, chromates and azo dyes. It could supply the reduced form of FMN to luciferase-like protein and contribute to the degradation of aromatic compounds. The polypeptide is FMN reductase [NAD(P)H] (nfrA2) (Bacillus subtilis (strain 168)).